The following is a 20-amino-acid chain: Allergen Asp fl 2 (20 aa).

This chain is Allergen Asp fl 2, found in Aspergillus flavus.